A 374-amino-acid chain; its full sequence is Pectinesterase (374 aa).

An N-terminal signal peptide occupies residues 1–31; the sequence is MVKLLNSTRELSINALSMLNSFGDMVAQATG. Asn58 and Asn124 each carry an N-linked (GlcNAc...) asparagine glycan. Residues Thr133 and Gln163 each coordinate substrate. Asp186 functions as the Proton donor in the catalytic mechanism. A disulfide bond links Cys200 and Cys220. The active-site Nucleophile is the Asp207. N-linked (GlcNAc...) asparagine glycosylation occurs at Asn230. Arg275 and Trp277 together coordinate substrate. Residue Asn303 is glycosylated (N-linked (GlcNAc...) asparagine).

Belongs to the pectinesterase family. In terms of tissue distribution, pollen, and at much lower levels in pistils and petals.

It localises to the secreted. Its subcellular location is the cell wall. It carries out the reaction [(1-&gt;4)-alpha-D-galacturonosyl methyl ester](n) + n H2O = [(1-&gt;4)-alpha-D-galacturonosyl](n) + n methanol + n H(+). Its pathway is glycan metabolism; pectin degradation; 2-dehydro-3-deoxy-D-gluconate from pectin: step 1/5. In terms of biological role, may play a role in pollen germination and/or tube growth. This chain is Pectinesterase (PPE1), found in Petunia integrifolia (Violet-flowered petunia).